Here is an 80-residue protein sequence, read N- to C-terminus: Exodeoxyribonuclease 7 small subunit (80 aa).

This sequence belongs to the XseB family. As to quaternary structure, heterooligomer composed of large and small subunits.

It localises to the cytoplasm. The enzyme catalyses Exonucleolytic cleavage in either 5'- to 3'- or 3'- to 5'-direction to yield nucleoside 5'-phosphates.. Functionally, bidirectionally degrades single-stranded DNA into large acid-insoluble oligonucleotides, which are then degraded further into small acid-soluble oligonucleotides. This is Exodeoxyribonuclease 7 small subunit from Vibrio atlanticus (strain LGP32) (Vibrio splendidus (strain Mel32)).